The primary structure comprises 141 residues: Hemoglobin subunit alpha-2 (141 aa).

Positions 1-141 constitute a Globin domain; that stretch reads VLSEGNKKII…VTYQLSSLYR (141 aa). Histidine 59 lines the O2 pocket. Histidine 88 is a binding site for heme b.

It belongs to the globin family. In terms of assembly, heterotetramer of two alpha chains and two beta chains. Red blood cells.

Functionally, involved in oxygen transport from the lung to the various peripheral tissues. This chain is Hemoglobin subunit alpha-2, found in Torpedo marmorata (Marbled electric ray).